The following is a 500-amino-acid chain: GTPase Der (500 aa).

EngA-type G domains are found at residues 3–166 (PVVA…MEEL) and 211–384 (IKLA…VSAT). GTP-binding positions include 9 to 16 (GRPNVGKS), 56 to 60 (DTGGI), 118 to 121 (NKID), 217 to 224 (GRPNVGKS), 264 to 268 (DTAGV), and 329 to 332 (NKWD). The 85-residue stretch at 385 to 469 (KRVGTSVLTR…PIRIQFQNSE (85 aa)) folds into the KH-like domain. Residues 468–500 (SENPFEDRGGKLTMSQERQRKRLLGAVKNRNKK) form a disordered region. Positions 486–500 (QRKRLLGAVKNRNKK) are enriched in basic residues.

It belongs to the TRAFAC class TrmE-Era-EngA-EngB-Septin-like GTPase superfamily. EngA (Der) GTPase family. Associates with the 50S ribosomal subunit.

GTPase that plays an essential role in the late steps of ribosome biogenesis. The polypeptide is GTPase Der (Aliivibrio fischeri (strain ATCC 700601 / ES114) (Vibrio fischeri)).